We begin with the raw amino-acid sequence, 547 residues long: Chaperonin GroEL (547 aa).

Residues 29–32 (TLGP), K50, 86–90 (DGTTT), G414, 478–480 (NAA), and D494 each bind ATP.

This sequence belongs to the chaperonin (HSP60) family. As to quaternary structure, forms a cylinder of 14 subunits composed of two heptameric rings stacked back-to-back. Interacts with the co-chaperonin GroES.

The protein localises to the cytoplasm. It catalyses the reaction ATP + H2O + a folded polypeptide = ADP + phosphate + an unfolded polypeptide.. Together with its co-chaperonin GroES, plays an essential role in assisting protein folding. The GroEL-GroES system forms a nano-cage that allows encapsulation of the non-native substrate proteins and provides a physical environment optimized to promote and accelerate protein folding. The sequence is that of Chaperonin GroEL from Saccharophagus degradans (strain 2-40 / ATCC 43961 / DSM 17024).